The chain runs to 309 residues: DNA-directed RNA polymerase subunit alpha (309 aa).

The alpha N-terminal domain (alpha-NTD) stretch occupies residues 1 to 225 (MFQVQCLESA…SLFKLVNSAD (225 aa)). An alpha C-terminal domain (alpha-CTD) region spans residues 237–309 (IVQVSQTDVT…LHERFNLTLN (73 aa)).

This sequence belongs to the RNA polymerase alpha chain family. In terms of assembly, in plastids the minimal PEP RNA polymerase catalytic core is composed of four subunits: alpha, beta, beta', and beta''. When a (nuclear-encoded) sigma factor is associated with the core the holoenzyme is formed, which can initiate transcription.

It localises to the plastid. Its subcellular location is the chloroplast. It catalyses the reaction RNA(n) + a ribonucleoside 5'-triphosphate = RNA(n+1) + diphosphate. DNA-dependent RNA polymerase catalyzes the transcription of DNA into RNA using the four ribonucleoside triphosphates as substrates. The sequence is that of DNA-directed RNA polymerase subunit alpha from Emiliania huxleyi (Coccolithophore).